The primary structure comprises 104 residues: NADH-ubiquinone oxidoreductase 12 kDa subunit, mitochondrial (104 aa).

It belongs to the complex I NDUFS6 subunit family. In terms of assembly, complex I is composed of about 40 different subunits.

The protein resides in the mitochondrion inner membrane. Functionally, accessory subunit of the mitochondrial membrane respiratory chain NADH dehydrogenase (Complex I), that is believed not to be involved in catalysis. Complex I functions in the transfer of electrons from NADH to the respiratory chain. The immediate electron acceptor for the enzyme is believed to be ubiquinone. The protein is NADH-ubiquinone oxidoreductase 12 kDa subunit, mitochondrial (nuo-12.3) of Neurospora crassa (strain ATCC 24698 / 74-OR23-1A / CBS 708.71 / DSM 1257 / FGSC 987).